We begin with the raw amino-acid sequence, 270 residues long: Photosystem I chlorophyll a/b-binding protein 6, chloroplastic (270 aa).

A chloroplast-targeting transit peptide spans 1-33 (MAFAIASALTSTLTLSTSRVQNPTQRRPHVAST). Positions 16 to 36 (STSRVQNPTQRRPHVASTSST) are disordered. Residues 19 to 36 (RVQNPTQRRPHVASTSST) show a composition bias toward polar residues. Tryptophan 68 contacts chlorophyll b. Phenylalanine 88 and glutamate 107 together coordinate chlorophyll a. Arginine 112 is a chlorophyll b binding site. Residues 146–164 (YFADSTTLFVAQMVLMGWA) traverse the membrane as a helical segment. Residues glutamate 165 and arginine 168 each coordinate chlorophyll b. Residues lysine 221, glutamate 222, asparagine 225, arginine 227, glutamine 239, and histidine 254 each contribute to the chlorophyll a site. Residues 228-244 (LAMLAFLGFCFQATYTS) traverse the membrane as a helical segment.

This sequence belongs to the light-harvesting chlorophyll a/b-binding (LHC) protein family. In terms of assembly, the LHC complex consists of chlorophyll a-b binding proteins. Homodimer. Binds pigments. Element of the NAD(P)H dehydrogenase-photosystem I supercomplex (NDH-PSI). The cofactor is Binds at least 14 chlorophylls (8 Chl-a and 6 Chl-b) and carotenoids such as lutein and neoxanthin.. In terms of processing, photoregulated by reversible phosphorylation of its threonine residues.

The protein localises to the plastid. It localises to the chloroplast thylakoid membrane. In terms of biological role, the light-harvesting complex (LHC) functions as a light receptor, it captures and delivers excitation energy to photosystems with which it is closely associated. Seems involved in the function of the photosystem I in low light conditions, when other LHCA proteins are less abundant. Required, together with LHCA5, for the formation of a full-size NAD(P)H dehydrogenase-photosystem I supercomplex (NDH-PSI) that triggers cyclic and chlororespiratory electron transport in chloroplast thylakoids, especially under stress conditions (e.g. increased light intensity). The protein is Photosystem I chlorophyll a/b-binding protein 6, chloroplastic of Arabidopsis thaliana (Mouse-ear cress).